The sequence spans 79 residues: Metallothionein-like protein type 2 (79 aa).

This sequence belongs to the metallothionein superfamily. Type 15 family.

Its function is as follows. Metallothioneins have a high content of cysteine residues that bind various heavy metals. This Malus domestica (Apple) protein is Metallothionein-like protein type 2 (MT1).